The primary structure comprises 714 residues: DNA ligase (714 aa).

NAD(+) contacts are provided by residues 59-63 (DYEYD), 108-109 (SL), and Glu139. Catalysis depends on Lys141, which acts as the N6-AMP-lysine intermediate. Residues Arg162, Glu200, Lys325, and Lys349 each coordinate NAD(+). Zn(2+)-binding residues include Cys443, Cys446, Cys461, and Cys466. One can recognise a BRCT domain in the interval 624–713 (VVENIFEGKT…IPDDLKDKVH (90 aa)).

The protein belongs to the NAD-dependent DNA ligase family. LigA subfamily. Requires Mg(2+) as cofactor. Mn(2+) is required as a cofactor.

The catalysed reaction is NAD(+) + (deoxyribonucleotide)n-3'-hydroxyl + 5'-phospho-(deoxyribonucleotide)m = (deoxyribonucleotide)n+m + AMP + beta-nicotinamide D-nucleotide.. DNA ligase that catalyzes the formation of phosphodiester linkages between 5'-phosphoryl and 3'-hydroxyl groups in double-stranded DNA using NAD as a coenzyme and as the energy source for the reaction. It is essential for DNA replication and repair of damaged DNA. The polypeptide is DNA ligase (Persephonella marina (strain DSM 14350 / EX-H1)).